Consider the following 252-residue polypeptide: Triosephosphate isomerase (252 aa).

10–12 (NWK) is a binding site for substrate. The Electrophile role is filled by His-96. The active-site Proton acceptor is Glu-168. Substrate is bound by residues Gly-174, Ser-214, and 235 to 236 (GG).

The protein belongs to the triosephosphate isomerase family. Homodimer.

The protein localises to the cytoplasm. The enzyme catalyses D-glyceraldehyde 3-phosphate = dihydroxyacetone phosphate. It participates in carbohydrate biosynthesis; gluconeogenesis. Its pathway is carbohydrate degradation; glycolysis; D-glyceraldehyde 3-phosphate from glycerone phosphate: step 1/1. Functionally, involved in the gluconeogenesis. Catalyzes stereospecifically the conversion of dihydroxyacetone phosphate (DHAP) to D-glyceraldehyde-3-phosphate (G3P). The protein is Triosephosphate isomerase of Streptococcus equi subsp. zooepidemicus (strain MGCS10565).